Reading from the N-terminus, the 62-residue chain is GEGACCNNCDFICGRAGFSRCRCLDLVTKCHPSCSNCEMTETPYWPCRYQCLDMDPDDCATP.

5 disulfides stabilise this stretch: Cys-5–Cys-59, Cys-6–Cys-23, Cys-13–Cys-21, Cys-30–Cys-37, and Cys-34–Cys-51.

Belongs to the Bowman-Birk serine protease inhibitor family. As to expression, expressed in bulb (at protein level).

Its function is as follows. Serine protease inhibitor. Inhibits trypsin (Ki = 65 nM) and weakly inhibits chymotrypsin (Ki = 295 nM). Does not inhibit bacterial subtilisin. The chain is Bowman-Birk type proteinase inhibitor B7 from Hyacinthus orientalis (Common hyacinth).